A 126-amino-acid chain; its full sequence is 5-carboxymethyl-2-hydroxymuconate Delta-isomerase (126 aa).

The active-site Proton acceptor; via imino nitrogen is the P2.

In terms of assembly, homotrimer.

The enzyme catalyses (2E,4Z)-5-hydroxypenta-2,4-diene-1,2,5-tricarboxylate = (3E,5R)-5-carboxy-2-oxohept-3-enedioate. Its pathway is aromatic compound metabolism; 4-hydroxyphenylacetate degradation; pyruvate and succinate semialdehyde from 4-hydroxyphenylacetate: step 4/7. In terms of biological role, transforms 5-carboxymethyl-2-hydroxy-muconic acid (CHM) into 5-oxo-pent-3-ene-1,2,5-tricarboxylic acid (OPET). The protein is 5-carboxymethyl-2-hydroxymuconate Delta-isomerase (hpcD) of Escherichia coli.